The primary structure comprises 268 residues: L-proline trans-4-hydroxylase (268 aa).

Fe cation is bound by residues His113, Asp115, and His218.

The protein belongs to the PhyH family. In terms of assembly, monomer. Fe(2+) is required as a cofactor.

The enzyme catalyses L-proline + 2-oxoglutarate + O2 = trans-4-hydroxy-L-proline + succinate + CO2. It functions in the pathway antibiotic biosynthesis. Its activity is regulated as follows. Competitively inhibited by pyridine-2,4-dicarboxylate. Inhibited by diethyl pyrocarbonate (DEPC), 3,4-dihydroxybenzoate, pyridine-2,5-dicarboxylate, alpha,alpha'-dipyridyl, and some metal ions such as Co(2+) and Zn(2+). Functionally, involved in the biosynthesis of the peptidolactone antibiotic etamycin (viridogrisein). Catalyzes the hydroxylation of free L-proline at the C-4 position to yield trans-4-hydroxy-L-proline. This Streptomyces griseoviridis protein is L-proline trans-4-hydroxylase.